A 2541-amino-acid chain; its full sequence is MVALSLKISIGNVVKTMQFEPSTMVYDACRMIRERVPEAQMGQPNDFGLFLSDEDPKKGIWLEAGKALDYYMLRNGDTMEYKKKQRPLKIRMLDGTVKTVMVDDSKTVTDMLTTICARIGITNYDEYSLVREIMEEKKEEVTGTLKKDKTLLRDEKKMEKLKQKLHTDDELNWLDHGRTLREQGIDDNETLLLRRKFFYSDQNVDSRDPVQLNLLYVQARDDILNGSHPVSFDKACEFAGYQCQIQFGPHNEQKHKPGFLELKDFLPKEYIKQKGERKIFMAHKNCGNMSEIEAKVRYVKLARSLKTYGVSFFLVKEKMKGKNKLVPRLLGITKECVMRVDEKTKEVIQEWSLTNIKRWAASPKSFTLDFGDYQDGYYSVQTTEGEQIAQLIAGYIDIILKKKKSKDHFGLEGDEESTMLEDSVSPKKSTVLQQQFNRVGKAELGSVALPAIMRTGAGGPENFQVGTMPQAQMQITSGQMHRGHMPPLTSAQQALTGTINSSMQAVNAAQATLDDFETLPPLGQDAASKAWRKNKMDESKHEIHSQADAITAGTASVVNLTAGDPADTDYTAVGCAVTTISSNLTEMSKGVKLLAALMEDEGGNGRQLLQAAKNLASAVSDLLKTAQPASAEPRQNLLQAAGLVGQTSGELLQQIGESDTDPRFQDMLMQLAKAVASAAAALVLKAKNVAQKTEDSALQTQVIAAATQCALSTSQLVACTKVVAPTISSPVCQEQLIEAGKLVAKSAEGCVEASKAATNDDQLLKQVGVAATAVTQALNDLLQHIKQHATGGQPIGRYDQATDTILNVTENIFSSMGDAGEMVRQARILAQATSDLVNAIKADAEGETDLENSRKLLSAAKILADATAKMVEAAKGAAAHPDSEEQQQRLREAAEGLRMATNAAAQNAIKKKLVHKLEHAAKQAAASATQTIAAAQHAAASNKNPAAQQQLVQSCKVVADQIPMLVQGVRGSQSQPDSPSAQLALIAASQNFLQPGGKMVAAAKATVPTITDQASAMQLSQCAKNLAAALAELRTAAQKAQEACGPLEIDSALGLVQSLERDLKEAKAAARDGKLKPLPGETMEKCAQDLGNSTKAVTSAIAHLLGEVAQGNENYTGIAAREVAQALRSLSQAARGVAANSSDPQAQNAMLECASDVMDKANNLIEEARKAVAKPGDPDSQQRLVQVAKAVSQALNRCVNCLPGQRDVDAAIRMVGEASKRLLSDSFPPSNKTFQEAQSQLNRAAAGLNQSANELVQASRGTPQDLAKSSGKFGQDFNEFLQAGVEMASLSPTKEDQAQVVSNLKSISMSSSKLLLAAKALSADPTSPNLKSQLAAAARAVTDSINQLITMCTQQAPGQKECDNALRELETVKELLENPTQTVNDMSYFSCLDSVMENSKVLGESMAGISQNAKNSKLPEFGESISAASKALCGLTEAAAQAAYLVGVSDPNSQAGQQGLVDPTQFARANQAIQMACQNLVDPACTQSQVLSAATIVAKHTSALCNTCRLASSRTANPVAKRQFVQPAKEVANSTANLVKTIKALDGAFNEENRERCRAATAPLIEAVDNLTAFASNPEFATVPAQISPEGRRAMEPIVTSAKTMLESSAGLIQTARSLAVNPKDPPQWSVLAGHSRTVSDSIKKLITNMRDKAPGQRECDEAIDVLNRCMREVDQASLAAISQQLAPREGISQEALHNQMITAVQEINNLIEPVASAARAEASQLGHKVSQMAQYFEPLILAAIGAASKTPNHQQQMNLLDQTKTLAESALQMLYTAKEAGGNPKQAAHTQEALEEAVQMMKEAVEDLTTTLNEAASAAGVVGGMVDSITQAINQLDEGPMGEPEGTFVDYQTTMVKTAKAIAVTVQEMVTKSTTNPDELGILANQLTNDYGQLAQQAKPAALTAENEEIGSHIKRRVQELGHGCAALVTKAGALQCSPSDAYTKKELIESARKVSEKVSHVLAALQAGNRGTQACITAASAVSGIIADLDTTIMFATAGTLNRENSETFADHREGILKTAKALVEDTKVLVQNATASQEKLAQAAQSSVSTITRLAEVVKLGAASLGSEDPETQVVLINAVKDVAKALGDLIGATKAAAGKAGDDPAVYQLKNSAKVMVTNVTSLLKTVKAVEDEATKGTRALEATIEHIRQELAVFSSPVPPAQVSTPEDFIRMTKGITMATAKAVAAGNSCRQEDVIATANLSRRAIADMLRACKEAAYHPEVSADVRQRALRFGKECADGYLELLEHVLVILQKPTHELKQQLAGYSKRVASSVTELIQAAEAMKGTEWVDPEDPTVIAENELLGAAAAIEAAAKKLEQLKPRAKPKQADESLDFEEQILEAAKSIAAATSALVKAASAAQRELVAQGKVGVIPANAVDDGQWSQGLISAARMVAAATNNLCEAANAAVQGHASEEKLISSAKQVAASTAQLLVACKVKADHDSEAMKRLQAAGNAVKRASDNLVKAAQKAAAFQDHDETVVVKEKMVGGIAQIIAAQEEMLRKERELEEARKKLAMIRQQQYKFLPTELRDEEQN.

The region spanning 86–403 (RPLKIRMLDG…GYIDIILKKK (318 aa)) is the FERM domain. The interval 280–435 (FMAHKNCGNM…PKKSTVLQQQ (156 aa)) is interaction with LAYN. The tract at residues 482–655 (RGHMPPLTSA…QTSGELLQQI (174 aa)) is helical bundle R1. The segment at 656 to 786 (GESDTDPRFQ…ALNDLLQHIK (131 aa)) is helical bundle R2. The tract at residues 787–911 (QHATGGQPIG…NAAAQNAIKK (125 aa)) is helical bundle R3. Residues 913 to 1043 (LVHKLEHAAK…RTAAQKAQEA (131 aa)) form a helical bundle R4 region. The tract at residues 1045 to 1205 (GPLEIDSALG…NRCVNCLPGQ (161 aa)) is helical bundle R5. Residues 1206–1356 (RDVDAAIRMV…QLITMCTQQA (151 aa)) form a helical bundle R6 region. Residues 1357 to 1452 (PGQKECDNAL…AYLVGVSDPN (96 aa)) are helical bundle R7A. The interval 1358-1658 (GQKECDNALR…NMRDKAPGQR (301 aa)) is interaction with VCL and F-actin. Positions 1460 to 1579 (LVDPTQFARA…NLTAFASNPE (120 aa)) are helical bundle R8. A glycan (O-linked (GlcNAc) threonine) is linked at Thr-1486. The helical bundle R7B stretch occupies residues 1580–1652 (FATVPAQISP…IKKLITNMRD (73 aa)). Positions 1654 to 1821 (APGQRECDEA…TLNEAASAAG (168 aa)) are helical bundle R9. The interval 1822–1972 (VVGGMVDSIT…VLAALQAGNR (151 aa)) is helical bundle R10. Thr-1889 carries an O-linked (GlcNAc) threonine glycan. Positions 1973–2139 (GTQACITAAS…TVKAVEDEAT (167 aa)) are helical bundle R11. The segment at 2140-2293 (KGTRALEATI…QAAEAMKGTE (154 aa)) is helical bundle R12. Residues 2292–2531 (TEWVDPEDPT…MIRQQQYKFL (240 aa)) enclose the I/LWEQ domain. Residues 2299-2481 (DPTVIAENEL…AAQKAAAFQD (183 aa)) form a helical bundle R13 region.

In terms of assembly, interacts with PIP5K1C and NRAP. Binds with high affinity to vinculin VCL and with low affinity to integrins. Interacts with APBB1IP; this inhibits VCL binding. Interacts with F-actin. Interacts with LAYN. Interacts with THSD1. Post-translationally, phosphorylated.

It localises to the cell projection. The protein localises to the ruffle membrane. The protein resides in the cytoplasm. Its subcellular location is the cytoskeleton. It is found in the cell surface. It localises to the cell junction. The protein localises to the focal adhesion. Its function is as follows. High molecular weight cytoskeletal protein concentrated at regions of cell-substratum contact and, in lymphocytes, at cell-cell contacts. Involved in connections of major cytoskeletal structures to the plasma membrane. The polypeptide is Talin-1 (TLN1) (Gallus gallus (Chicken)).